The primary structure comprises 327 residues: Thiamine-binding periplasmic protein (327 aa).

The signal sequence occupies residues 1–18 (MLKKCLPLLLLCTAPVFA). Residues 59–60 (DG), 161–162 (ST), Trp-197, and 215–218 (YTTS) each bind thiamine.

It belongs to the bacterial solute-binding protein 1 family. As to quaternary structure, monomer in solution. The complex is composed of two ATP-binding proteins (ThiQ), two transmembrane proteins (ThiP) and a solute-binding protein (ThiB).

The protein localises to the periplasm. Its activity is regulated as follows. Transport is inhibited by the sulfhydryl-specific modifier N-ethylmaleimide. Part of the ABC transporter complex ThiBPQ involved in thiamine import. Binds thiamine, thiamine phosphate and thiamine diphosphate with high affinity. This Escherichia coli (strain K12) protein is Thiamine-binding periplasmic protein (thiB).